A 410-amino-acid polypeptide reads, in one-letter code: Peptide chain release factor subunit 1 (410 aa).

The protein belongs to the eukaryotic release factor 1 family. Heterodimer of two subunits, one of which binds GTP.

It localises to the cytoplasm. Directs the termination of nascent peptide synthesis (translation) in response to the termination codons UAA, UAG and UGA. This is Peptide chain release factor subunit 1 from Picrophilus torridus (strain ATCC 700027 / DSM 9790 / JCM 10055 / NBRC 100828 / KAW 2/3).